The primary structure comprises 674 residues: Sterile alpha motif domain-containing protein 15 (674 aa).

Positions 1–18 (MAEVPEDYDSGPDEDGEL) are enriched in acidic residues. Residues 1–448 (MAEVPEDYDS…LEHREPKRGK (448 aa)) form a disordered region. Basic and acidic residues-rich tracts occupy residues 87-142 (IAKE…EEAK), 195-223 (ESLR…KLGE), and 236-274 (TKPE…KSSE). Positions 276-290 (AGLEPPEETQPEVPE) are enriched in acidic residues. 4 stretches are compositionally biased toward basic and acidic residues: residues 291–322 (EMQR…KSTD), 330–346 (EEIK…KTNE), 354–372 (EMMK…EKKN), and 391–429 (VEEK…EPIK). An SAM domain is found at 545–608 (WDPEEVAEWI…SRHTQELLEI (64 aa)).

The sequence is that of Sterile alpha motif domain-containing protein 15 (SAMD15) from Homo sapiens (Human).